A 204-amino-acid polypeptide reads, in one-letter code: Thiamine-phosphate synthase (204 aa).

4-amino-2-methyl-5-(diphosphooxymethyl)pyrimidine-binding positions include 37–41 (QVREK) and Asn-69. The Mg(2+) site is built by Asp-70 and Asp-89. Ser-108 lines the 4-amino-2-methyl-5-(diphosphooxymethyl)pyrimidine pocket. 134–136 (TGT) is a binding site for 2-[(2R,5Z)-2-carboxy-4-methylthiazol-5(2H)-ylidene]ethyl phosphate. A 4-amino-2-methyl-5-(diphosphooxymethyl)pyrimidine-binding site is contributed by Lys-137. 2-[(2R,5Z)-2-carboxy-4-methylthiazol-5(2H)-ylidene]ethyl phosphate contacts are provided by residues Gly-165 and 185–186 (IS).

It belongs to the thiamine-phosphate synthase family. Mg(2+) is required as a cofactor.

It carries out the reaction 2-[(2R,5Z)-2-carboxy-4-methylthiazol-5(2H)-ylidene]ethyl phosphate + 4-amino-2-methyl-5-(diphosphooxymethyl)pyrimidine + 2 H(+) = thiamine phosphate + CO2 + diphosphate. The catalysed reaction is 2-(2-carboxy-4-methylthiazol-5-yl)ethyl phosphate + 4-amino-2-methyl-5-(diphosphooxymethyl)pyrimidine + 2 H(+) = thiamine phosphate + CO2 + diphosphate. It catalyses the reaction 4-methyl-5-(2-phosphooxyethyl)-thiazole + 4-amino-2-methyl-5-(diphosphooxymethyl)pyrimidine + H(+) = thiamine phosphate + diphosphate. The protein operates within cofactor biosynthesis; thiamine diphosphate biosynthesis; thiamine phosphate from 4-amino-2-methyl-5-diphosphomethylpyrimidine and 4-methyl-5-(2-phosphoethyl)-thiazole: step 1/1. Condenses 4-methyl-5-(beta-hydroxyethyl)thiazole monophosphate (THZ-P) and 2-methyl-4-amino-5-hydroxymethyl pyrimidine pyrophosphate (HMP-PP) to form thiamine monophosphate (TMP). This chain is Thiamine-phosphate synthase, found in Clostridium novyi (strain NT).